We begin with the raw amino-acid sequence, 120 residues long: Autophagy-related protein 8d (120 aa).

G117 carries the Phosphatidylethanolamine amidated glycine lipid modification. Positions 118–120 (IFF) are cleaved as a propeptide — removed in mature form.

It belongs to the ATG8 family. In terms of assembly, interacts with ATG4B. Interacts with NBR1. Post-translationally, the C-terminal 3 residues are removed by ATG4 to expose Gly-117 at the C-terminus. This Gly-117 forms then a thioester bond with the 'Cys-558' of ATG7 (E1-like activating enzyme) before being transferred to the 'Cys-258' of ATG3 (the specific E2 conjugating enzyme), in order to be finally amidated with phosphatidylethanolamine. This lipid modification anchors ATG8 to autophagosomes. Constitutively expressed.

The protein resides in the cytoplasmic vesicle. The protein localises to the autophagosome membrane. Its subcellular location is the vacuole membrane. It localises to the cytoplasm. It is found in the cytoskeleton. In terms of biological role, ubiquitin-like modifier involved in autophagosomes formation. May mediate the delivery of the autophagosomes to the vacuole via the microtubule cytoskeleton. This chain is Autophagy-related protein 8d (ATG8D), found in Arabidopsis thaliana (Mouse-ear cress).